Here is a 368-residue protein sequence, read N- to C-terminus: MEDKYIGLALAMSSSLAIGTSFIITKKGLMDASARTGGTDGVQASDYLQNPIWWGGMITMAIGEIANFAAYTFAPAILVTPLGALSVIIGAVLAAIFLKERLGTLGKMGCAICLMGSVIIILHAPPDKEVQTVDEILGYATQPGFMFYCTVVTLYSLFMIYKIVPKYGNTNPMIYLSICSSVGSISVMSIKAFGIALKLTLGGNNQFTHVSTYLFLIVVALCIVTQMNYFNKALDQFDTSIVNPLYYVTFTTFTLAASFILFKGFNTSSAVDIISLLIGFLIIFSGVYLLNISRSESPMVDRDREIFGVHTSKDMAPLDNGVGGFSTVRRSMQINRTSEYDNEESVGLRRFDSFEIDSGDEDTRNYRH.

Residues methionine 1–lysine 4 are Extracellular-facing. A helical membrane pass occupies residues tyrosine 5–threonine 25. Residues lysine 26–asparagine 50 lie on the Cytoplasmic side of the membrane. The chain crosses the membrane as a helical span at residues proline 51–tyrosine 71. At threonine 72 to alanine 76 the chain is on the extracellular side. The helical transmembrane segment at isoleucine 77–phenylalanine 97 threads the bilayer. Residues leucine 98–arginine 101 lie on the Cytoplasmic side of the membrane. The helical transmembrane segment at leucine 102–leucine 122 threads the bilayer. At histidine 123–proline 143 the chain is on the extracellular side. The helical transmembrane segment at glycine 144 to valine 164 threads the bilayer. Over proline 165–tyrosine 175 the chain is Cytoplasmic. A helical transmembrane segment spans residues leucine 176–alanine 196. The Extracellular segment spans residues leucine 197–glutamine 206. A helical membrane pass occupies residues phenylalanine 207 to methionine 227. The Cytoplasmic portion of the chain corresponds to asparagine 228–serine 240. A helical membrane pass occupies residues isoleucine 241–leucine 261. Residues phenylalanine 262–serine 269 are Extracellular-facing. The N-linked (GlcNAc...) asparagine glycan is linked to asparagine 266. Residues alanine 270 to leucine 290 traverse the membrane as a helical segment. At asparagine 291–histidine 368 the chain is on the cytoplasmic side.

This sequence belongs to the NIPA family.

The protein localises to the cell membrane. The protein resides in the early endosome. It carries out the reaction Mg(2+)(in) = Mg(2+)(out). Its function is as follows. Probably acts as a selective Mg(2+) transporter. Plays a role in cell wall integrity and in engulfment by host macrophages. The chain is Probable magnesium transporter from Candida albicans (strain SC5314 / ATCC MYA-2876) (Yeast).